We begin with the raw amino-acid sequence, 213 residues long: Cytochrome b-c1 complex subunit Rieske, mitochondrial (213 aa).

The N-terminal 29 residues, 1 to 29, are a transit peptide targeting the mitochondrion; the sequence is MSSLAFRTLRNGLGLKSSVRALSTTTTTL. Over 30–47 the chain is Mitochondrial matrix; the sequence is SNYQQPDYSSYLNNKSGQ. The chain crosses the membrane as a helical span at residues 48 to 77; it reads GSRNFTYFMVGSMGLLSAAGAKSTVEAFLS. The Mitochondrial intermembrane portion of the chain corresponds to 78 to 213; that stretch reads SFAASADVLA…FTDDETLLVG (136 aa). The 96-residue stretch at 116–211 folds into the Rieske domain; the sequence is RHRTADEIEE…YDFTDDETLL (96 aa). Residues Cys156, His158, Cys175, and His178 each contribute to the [2Fe-2S] cluster site. Cys161 and Cys177 are disulfide-bonded.

This sequence belongs to the Rieske iron-sulfur protein family. Component of the ubiquinol-cytochrome c oxidoreductase (cytochrome b-c1 complex, complex III, CIII), a multisubunit enzyme composed of 10 subunits. The complex is composed of 3 respiratory subunits cytochrome b (COB), cytochrome c1 (CYT1) and Rieske protein (RIP1), 2 core protein subunits COR1 and QCR2, and 5 low-molecular weight protein subunits QCR6, QCR7, QCR8, QCR9 and QCR10. The complex exists as an obligatory dimer and forms supercomplexes (SCs) in the inner mitochondrial membrane with a monomer or a dimer of cytochrome c oxidase (complex IV, CIV), resulting in 2 different assemblies (supercomplexes III(2)IV and III(2)IV(2)). Requires [2Fe-2S] cluster as cofactor.

Its subcellular location is the mitochondrion inner membrane. It catalyses the reaction a quinol + 2 Fe(III)-[cytochrome c](out) = a quinone + 2 Fe(II)-[cytochrome c](out) + 2 H(+)(out). Functionally, component of the ubiquinol-cytochrome c oxidoreductase, a multisubunit transmembrane complex that is part of the mitochondrial electron transport chain which drives oxidative phosphorylation. The complex plays an important role in the uptake of multiple carbon sources present in different host niches. The polypeptide is Cytochrome b-c1 complex subunit Rieske, mitochondrial (Candida albicans (strain SC5314 / ATCC MYA-2876) (Yeast)).